Here is a 224-residue protein sequence, read N- to C-terminus: Phosphoribosylformylglycinamidine synthase subunit PurQ (224 aa).

Residues 2 to 224 (TVAIIRFGGS…DGQGVLEGFR (223 aa)) enclose the Glutamine amidotransferase type-1 domain. Catalysis depends on Cys-85, which acts as the Nucleophile. Residues His-202 and Glu-204 contribute to the active site. Positions 204 to 224 (ERASLPDIGPTDGQGVLEGFR) are disordered.

Part of the FGAM synthase complex composed of 1 PurL, 1 PurQ and 2 PurS subunits.

It is found in the cytoplasm. It catalyses the reaction N(2)-formyl-N(1)-(5-phospho-beta-D-ribosyl)glycinamide + L-glutamine + ATP + H2O = 2-formamido-N(1)-(5-O-phospho-beta-D-ribosyl)acetamidine + L-glutamate + ADP + phosphate + H(+). It carries out the reaction L-glutamine + H2O = L-glutamate + NH4(+). It functions in the pathway purine metabolism; IMP biosynthesis via de novo pathway; 5-amino-1-(5-phospho-D-ribosyl)imidazole from N(2)-formyl-N(1)-(5-phospho-D-ribosyl)glycinamide: step 1/2. Functionally, part of the phosphoribosylformylglycinamidine synthase complex involved in the purines biosynthetic pathway. Catalyzes the ATP-dependent conversion of formylglycinamide ribonucleotide (FGAR) and glutamine to yield formylglycinamidine ribonucleotide (FGAM) and glutamate. The FGAM synthase complex is composed of three subunits. PurQ produces an ammonia molecule by converting glutamine to glutamate. PurL transfers the ammonia molecule to FGAR to form FGAM in an ATP-dependent manner. PurS interacts with PurQ and PurL and is thought to assist in the transfer of the ammonia molecule from PurQ to PurL. The polypeptide is Phosphoribosylformylglycinamidine synthase subunit PurQ (Natronomonas pharaonis (strain ATCC 35678 / DSM 2160 / CIP 103997 / JCM 8858 / NBRC 14720 / NCIMB 2260 / Gabara) (Halobacterium pharaonis)).